Here is a 452-residue protein sequence, read N- to C-terminus: Adenylosuccinate synthetase (452 aa).

Residues 40 to 46 (GDEGKGK) and 68 to 70 (GHT) contribute to the GTP site. Asp-41 (proton acceptor) is an active-site residue. Mg(2+) is bound by residues Asp-41 and Gly-68. IMP contacts are provided by residues 41–44 (DEGK), 66–69 (NAGH), Thr-158, Arg-172, Asn-250, Thr-265, and Arg-329. The active-site Proton donor is the His-69. 325 to 331 (VTTKRKR) contacts substrate. Residues Arg-331, 357–359 (KLD), and 440–442 (GVG) contribute to the GTP site.

This sequence belongs to the adenylosuccinate synthetase family. Homodimer. Mg(2+) is required as a cofactor.

Its subcellular location is the cytoplasm. It catalyses the reaction IMP + L-aspartate + GTP = N(6)-(1,2-dicarboxyethyl)-AMP + GDP + phosphate + 2 H(+). Its pathway is purine metabolism; AMP biosynthesis via de novo pathway; AMP from IMP: step 1/2. Its function is as follows. Plays an important role in the de novo pathway and in the salvage pathway of purine nucleotide biosynthesis. Catalyzes the first committed step in the biosynthesis of AMP from IMP. The protein is Adenylosuccinate synthetase of Drosophila grimshawi (Hawaiian fruit fly).